The sequence spans 178 residues: NADH-quinone oxidoreductase subunit B (178 aa).

Positions 45, 46, 111, and 140 each coordinate [4Fe-4S] cluster.

The protein belongs to the complex I 20 kDa subunit family. NDH-1 is composed of 15 different subunits. Subunits NuoB, C, D, E, F, and G constitute the peripheral sector of the complex. [4Fe-4S] cluster is required as a cofactor.

It is found in the cell membrane. The catalysed reaction is a quinone + NADH + 5 H(+)(in) = a quinol + NAD(+) + 4 H(+)(out). Functionally, NDH-1 shuttles electrons from NADH, via FMN and iron-sulfur (Fe-S) centers, to quinones in the respiratory chain. The immediate electron acceptor for the enzyme in this species is believed to be a menaquinone. Couples the redox reaction to proton translocation (for every two electrons transferred, four hydrogen ions are translocated across the cytoplasmic membrane), and thus conserves the redox energy in a proton gradient. This chain is NADH-quinone oxidoreductase subunit B, found in Deinococcus geothermalis (strain DSM 11300 / CIP 105573 / AG-3a).